A 106-amino-acid chain; its full sequence is Transcriptional and immune response regulator (106 aa).

As to quaternary structure, monomer. Interacts with NOTCH2 (via ANK repeats), the interaction inhibits the nuclear translocation of NOTCH2 N2ICD. Interacts (C-terminus) with CBY1 (C-terminus), TCIM competes with CTNNB1 for the interaction with CBY1.

The protein localises to the cytoplasm. It localises to the nucleus. Its subcellular location is the nucleolus. The protein resides in the nucleus speckle. In terms of biological role, seems to be involved in the regulation of cell growth an differentiation, may play different and opposite roles depending on the tissue or cell type. May enhance the WNT-CTNNB1 pathway by relieving antagonistic activity of CBY1. Enhances the proliferation of follicular dendritic cells. Plays a role in the mitogen-activated MAPK2/3 signaling pathway, positively regulates G1-to-S-phase transition of the cell cycle. In endothelial cells, enhances key inflammatory mediators and inflammatory response through the modulation of NF-kappaB transcriptional regulatory activity. Involved in the regulation of heat shock response, seems to play a positive feedback with HSF1 to modulate heat-shock downstream gene expression. Plays a role in the regulation of hematopoiesis even if the mechanisms are unknown. In cancers such as thyroid or lung cancer, it has been described as promoter of cell proliferation, G1-to-S-phase transition and inhibitor of apoptosis. However, it negatively regulates self-renewal of liver cancer cells via suppresion of NOTCH2 signaling. In Bos taurus (Bovine), this protein is Transcriptional and immune response regulator (TCIM).